Reading from the N-terminus, the 571-residue chain is Glutamate--tRNA ligase (571 aa).

Residues 110–120 carry the 'HIGH' region motif; it reads PNPNGPGTLGS.

This sequence belongs to the class-I aminoacyl-tRNA synthetase family. Glutamate--tRNA ligase type 2 subfamily.

The protein resides in the cytoplasm. The enzyme catalyses tRNA(Glu) + L-glutamate + ATP = L-glutamyl-tRNA(Glu) + AMP + diphosphate. Its function is as follows. Catalyzes the attachment of glutamate to tRNA(Glu) in a two-step reaction: glutamate is first activated by ATP to form Glu-AMP and then transferred to the acceptor end of tRNA(Glu). This is Glutamate--tRNA ligase from Methanosarcina acetivorans (strain ATCC 35395 / DSM 2834 / JCM 12185 / C2A).